The sequence spans 312 residues: Atrochrysone carboxyl ACP thioesterase AacuM (312 aa).

Zn(2+) contacts are provided by His103, His105, Asp107, and His108. Asp107 acts as the Proton donor/acceptor in catalysis.

The protein belongs to the metallo-beta-lactamase superfamily. Zn(2+) serves as cofactor.

The enzyme catalyses atrochrysone carboxyl-[ACP] + H2O = atrochrysone carboxylate + holo-[ACP] + H(+). Its pathway is secondary metabolite biosynthesis. In terms of biological role, atrochrysone carboxyl ACP thioesterase; part of the gene cluster that mediates the biosynthesis of the tetrahydroxanthone dimer secalonic acid D. The pathway begins with the synthesis of atrochrysone thioester by the polyketide synthase AacuL. The atrochrysone carboxyl ACP thioesterase AacuM then breaks the thioester bond and releases the atrochrysone carboxylic acid from AacuL. Atrochrysone carboxylic acid is decarboxylated by the decarboxylase AacuI, and oxidized by the anthrone oxygenase AacuG to yield emodin. Emodin is then reduced to emodin hydroquinone by a yet unidentified oxidoreductase. A-ring reduction by the short chain dehydrogenase AacuN, dehydration by the scytalone dehydratase-like protein AacuK and probable spontaneous re-oxidation, results in overall deoxygenation to chrysophanol. Baeyer-Villiger oxidation by the Baeyer-Villiger monooxygenase (BVMO) AacuH then yields monodictyphenone. Monodictyphenone is transformed into compounds with the tetrahydroxanthone skeleton via methylesterification by the methyltransferase AacuQ, followed by the action of the flavin-dependent monooxygenase AacuC, the isomerase AacuP, and the short chain dehydrogenase/reductase AacuF or AacuD. AacuF and AacuD should accept the same compound as a substrate but perform the ketoreduction with a different stereoselectivity, thus yielding blennolides B and A, respectively. In the final step of the biosynthesis, the cytochrome P450 monooxygenase AacuE accepts blennolide B and/or blennolide A to conduct the dimerization reaction to furnish the tetrahydroxanthone dimers, secalonic acids D, B, and F. This chain is Atrochrysone carboxyl ACP thioesterase AacuM, found in Aspergillus aculeatus (strain ATCC 16872 / CBS 172.66 / WB 5094).